The sequence spans 110 residues: PHD finger-like domain-containing protein 5B (110 aa).

Belongs to the PHF5 family.

In Arabidopsis thaliana (Mouse-ear cress), this protein is PHD finger-like domain-containing protein 5B.